Reading from the N-terminus, the 204-residue chain is Methylthioribulose-1-phosphate dehydratase (204 aa).

Zn(2+) contacts are provided by histidine 94 and histidine 96.

The protein belongs to the aldolase class II family. MtnB subfamily. Zn(2+) is required as a cofactor.

The enzyme catalyses 5-(methylsulfanyl)-D-ribulose 1-phosphate = 5-methylsulfanyl-2,3-dioxopentyl phosphate + H2O. The protein operates within amino-acid biosynthesis; L-methionine biosynthesis via salvage pathway; L-methionine from S-methyl-5-thio-alpha-D-ribose 1-phosphate: step 2/6. Functionally, catalyzes the dehydration of methylthioribulose-1-phosphate (MTRu-1-P) into 2,3-diketo-5-methylthiopentyl-1-phosphate (DK-MTP-1-P). The polypeptide is Methylthioribulose-1-phosphate dehydratase (Pseudomonas syringae pv. tomato (strain ATCC BAA-871 / DC3000)).